Here is a 484-residue protein sequence, read N- to C-terminus: Glycogen synthase (484 aa).

An ADP-alpha-D-glucose-binding site is contributed by K18.

The protein belongs to the glycosyltransferase 1 family. Bacterial/plant glycogen synthase subfamily.

The enzyme catalyses [(1-&gt;4)-alpha-D-glucosyl](n) + ADP-alpha-D-glucose = [(1-&gt;4)-alpha-D-glucosyl](n+1) + ADP + H(+). The protein operates within glycan biosynthesis; glycogen biosynthesis. Synthesizes alpha-1,4-glucan chains using ADP-glucose. This chain is Glycogen synthase, found in Vibrio cholerae serotype O1 (strain ATCC 39541 / Classical Ogawa 395 / O395).